The following is a 335-amino-acid chain: MIEFQRLHKSYSVDGRQIVALHPLDLRIGPGEVFGIIGHSGAGKSTLIRLINRLEEPSGGRLLIGDEDVTALDSQGLRALRRRIGMIFQHFNLLSSRTVAGNVAFPLELVGTPRAEIDARVAELLARVGLQEQANQYPAQLSGGQKQRVGIARALATGPQILLCDEATSALDPQTTASVLQLLAQINRELGLTIVLITHEMDVIRRVCDRVAVLDAGKLVETGPVTEVFLHPKHVTTRRFVSEAEHLDEAELHRDFAAVGGRIVRLTFLGNGTYEPVLGRIARDTGVDYNILSGRVDRIKDTPYGQLIVALTGGDQTAARAGFVAAGVQVEDLRV.

One can recognise an ABC transporter domain in the interval 2-241 (IEFQRLHKSY…PKHVTTRRFV (240 aa)). 38 to 45 (GHSGAGKS) is a binding site for ATP.

The protein belongs to the ABC transporter superfamily. Methionine importer (TC 3.A.1.24) family. As to quaternary structure, the complex is composed of two ATP-binding proteins (MetN), two transmembrane proteins (MetI) and a solute-binding protein (MetQ).

It is found in the cell inner membrane. The enzyme catalyses L-methionine(out) + ATP + H2O = L-methionine(in) + ADP + phosphate + H(+). It catalyses the reaction D-methionine(out) + ATP + H2O = D-methionine(in) + ADP + phosphate + H(+). In terms of biological role, part of the ABC transporter complex MetNIQ involved in methionine import. Responsible for energy coupling to the transport system. The polypeptide is Methionine import ATP-binding protein MetN (Xanthomonas oryzae pv. oryzae (strain MAFF 311018)).